The chain runs to 827 residues: Zinc finger protein 438 (827 aa).

Disordered regions lie at residues 1-31 (MQNSLSVPPRDEGESNIPSGTIQSRKGLQNK), 117-173 (LKLP…LYKP), and 193-232 (ALTNGSDHGDLRPPVTNTHGSLNPPATPASPTPEEPAKQD). Composition is skewed to polar residues over residues 16-31 (NIPSGTIQSRKGLQNK) and 150-159 (PAQTQMCPQM). Positions 217–226 (PATPASPTPE) are enriched in pro residues. 3 consecutive C2H2-type zinc fingers follow at residues 506-528 (HRCHVCNHHFQFKQHLQDHMNTH), 534-556 (YSCRICRKSYVRPGSLSTHMKLH), and 566-589 (MCCEFCAKVFGHIRVYFGHLKEVH). Residues 682 to 723 (FPGSKGTQEELVQHASHDWKRHPERGKPEKVHSSSEESHACP) form a disordered region. Basic and acidic residues-rich tracts occupy residues 688–699 (TQEELVQHASHD) and 706–721 (RGKPEKVHSSSEESHA). The C2H2-type 4 zinc finger occupies 775–798 (FNCLLCAEMLGQKEDLLHHWKHQH).

Its subcellular location is the nucleus. Its function is as follows. Acts as a transcriptional repressor. This chain is Zinc finger protein 438 (ZNF438), found in Pongo abelii (Sumatran orangutan).